The following is a 598-amino-acid chain: Arylsulfate sulfotransferase AssT (598 aa).

Positions 1 to 27 (MFDKYRKTLVAGTVAITLGLSASGVMA) are cleaved as a signal peptide. 4-methylumbelliferone-binding residues include H279 and H383. A disulfide bond links C445 and C451. H463 is a 4-methylumbelliferone binding site. Catalysis depends on H463, which acts as the Nucleophile; sulfurylated histidine covalent intermediate.

This sequence belongs to the aryl sulfotransferase family. In terms of assembly, homodimer. Post-translationally, the disulfide bond is crucial for enzyme activity.

Its subcellular location is the periplasm. It carries out the reaction an aryl sulfate + a phenol = an aryl sulfate + a phenol. The enzyme catalyses 4-methylumbelliferone sulfate + phenol = phenyl sulfate + 4-methylumbelliferone. Catalyzes the transfer of a sulfate group from a phenyl sulfate ester to other phenolic compounds. In vitro, is able to use 4-methylumbelliferyl sulfate and p-nitrophenyl sulfate (PNS) as donor substrates with phenol as the acceptor substrate. Cannot use 3'-phosphoadenosine-5'-phophosulfate (PAPS), the donor substrate of mammalian sulfotransferase. The chain is Arylsulfate sulfotransferase AssT from Escherichia coli O6:H1 (strain CFT073 / ATCC 700928 / UPEC).